We begin with the raw amino-acid sequence, 304 residues long: Protein transport protein sec13 (304 aa).

WD repeat units follow at residues glycine 12–valine 51, glycine 56–isoleucine 97, leucine 102–asparagine 143, alanine 147–lysine 203, glycine 211–tryptophan 253, and asparagine 259–asparagine 298.

This sequence belongs to the WD repeat SEC13 family. In terms of assembly, the COPII coat is composed of at least 5 proteins: the sec23/24 complex, the sec13/31 complex, and the protein vtr-7/sar1. Component of the nuclear pore complex (NPC). NPC constitutes the exclusive means of nucleocytoplasmic transport. NPCs allow the passive diffusion of ions and small molecules and the active, nuclear transport receptor-mediated bidirectional transport of macromolecules such as proteins, RNAs, ribonucleoparticles (RNPs), and ribosomal subunits across the nuclear envelope. Due to its 8-fold rotational symmetry, all subunits are present with 8 copies or multiples thereof.

Its subcellular location is the cytoplasmic vesicle. It is found in the COPII-coated vesicle membrane. The protein localises to the endoplasmic reticulum membrane. The protein resides in the nucleus. It localises to the nuclear pore complex. Functionally, component of the coat protein complex II (COPII) which promotes the formation of transport vesicles from the endoplasmic reticulum (ER). The coat has two main functions, the physical deformation of the endoplasmic reticulum membrane into vesicles and the selection of cargo molecules. It also functions as a component of the nuclear pore complex (NPC). NPC components, collectively referred to as nucleoporins (NUPs), can play the role of both NPC structural components and of docking or interaction partners for transiently associated nuclear transport factors. Nup-20/sec13 is required for efficient mRNA export from the nucleus to the cytoplasm and for correct nuclear pore biogenesis and distribution. This Neurospora crassa (strain ATCC 24698 / 74-OR23-1A / CBS 708.71 / DSM 1257 / FGSC 987) protein is Protein transport protein sec13 (nup-20).